Consider the following 1026-residue polypeptide: Contactin-4 (1026 aa).

An N-terminal signal peptide occupies residues 1–18 (MRLPWELLVLQSFILCLA). Ig-like C2-type domains follow at residues 32–117 (PSPV…AKLQ), 122–207 (DNFK…KVLG), 225–311 (PKIE…GQLT), 316–400 (PNWI…AELS), 406–493 (PDFS…GNLV), and 497–586 (PTRV…DRLS). Cystine bridges form between Cys-50–Cys-100, Cys-144–Cys-194, Cys-247–Cys-295, Cys-337–Cys-384, Cys-429–Cys-477, and Cys-519–Cys-576. N-linked (GlcNAc...) asparagine glycosylation is found at Asn-65, Asn-90, and Asn-191. Residues Asn-370, Asn-375, and Asn-466 are each glycosylated (N-linked (GlcNAc...) asparagine). 4 consecutive Fibronectin type-III domains span residues 599-697 (PPEA…TEEA), 702-799 (TPAN…SAEE), 804-899 (PPAS…TRKP), and 900-995 (PPSQ…ISNA). The interval 685-710 (PSRPSEKRRTEEALPEVTPANVSGGG) is disordered. Basic and acidic residues predominate over residues 687–696 (RPSEKRRTEE). 7 N-linked (GlcNAc...) asparagine glycosylation sites follow: Asn-705, Asn-764, Asn-858, Asn-893, Asn-911, Asn-929, and Asn-954. The span at 886 to 896 (GPSSATVNVTT) shows a compositional bias: polar residues. Residues 886 to 907 (GPSSATVNVTTRKPPPSQPPGN) are disordered. The GPI-anchor amidated serine moiety is linked to residue Ser-1000. A propeptide spans 1001-1026 (GASTSNACTLSAISTIMISLTARSSL) (removed in mature form).

Belongs to the immunoglobulin superfamily. Contactin family. Interacts with PTPRG. As to expression, mainly expressed in brain. Highly expressed in cerebellum and weakly expressed in corpus callosum, caudate nucleus, amygdala and spinal cord. Also expressed in testis, pancreas, thyroid, uterus, small intestine and kidney. Not expressed in skeletal muscle. Isoform 2 is weakly expressed in cerebral cortex.

Its subcellular location is the cell membrane. The protein localises to the secreted. Contactins mediate cell surface interactions during nervous system development. Has some neurite outgrowth-promoting activity. May be involved in synaptogenesis. This Homo sapiens (Human) protein is Contactin-4 (CNTN4).